A 142-amino-acid chain; its full sequence is Large ribosomal subunit protein uL13 (142 aa).

It belongs to the universal ribosomal protein uL13 family. Part of the 50S ribosomal subunit.

In terms of biological role, this protein is one of the early assembly proteins of the 50S ribosomal subunit, although it is not seen to bind rRNA by itself. It is important during the early stages of 50S assembly. This chain is Large ribosomal subunit protein uL13, found in Stenotrophomonas maltophilia (strain K279a).